Consider the following 695-residue polypeptide: ATP-dependent DNA helicase II subunit 2 (695 aa).

Residues 229-461 (FSIGNRDSKD…IDFAVSNYID (233 aa)) form the Ku domain.

The protein belongs to the ku80 family. In terms of assembly, heterodimer of pku70 and pku80.

Its subcellular location is the nucleus. It localises to the chromosome. It is found in the telomere. The enzyme catalyses ATP + H2O = ADP + phosphate + H(+). Its function is as follows. Single-stranded DNA-dependent ATP-dependent helicase. Involved in non-homologous end joining (NHEJ) DNA double strand break repair. DNA-binding is sequence-independent but has a high affinity to nicks in double-stranded DNA and to the ends of duplex DNA. Binds to naturally occurring chromosomal ends, and therefore provides chromosomal end protection. Required also for telomere recombination to repair telomeric ends in the absence of telomerase. ku70, of the ku70/ku80 heterodimer, binds to the stem loop of tlc1, the RNA component of telomerase. Involved in telomere maintenance. Interacts with telomeric repeats and subtelomeric sequences thereby controlling telomere length and protecting against subtelomeric rearrangement. Required for mating-type switching. This Schizosaccharomyces pombe (strain 972 / ATCC 24843) (Fission yeast) protein is ATP-dependent DNA helicase II subunit 2 (pku80).